The sequence spans 318 residues: UDP-N-acetylenolpyruvoylglucosamine reductase (318 aa).

Positions Val-39–Gly-202 constitute an FAD-binding PCMH-type domain. Arg-182 is a catalytic residue. The segment covering Asp-214 to Pro-223 has biased composition (basic and acidic residues). Residues Asp-214–Asn-235 form a disordered region. Residue Ser-231 is the Proton donor of the active site. Residue Glu-301 is part of the active site.

This sequence belongs to the MurB family. FAD is required as a cofactor.

The protein resides in the cytoplasm. The enzyme catalyses UDP-N-acetyl-alpha-D-muramate + NADP(+) = UDP-N-acetyl-3-O-(1-carboxyvinyl)-alpha-D-glucosamine + NADPH + H(+). The protein operates within cell wall biogenesis; peptidoglycan biosynthesis. In terms of biological role, cell wall formation. The protein is UDP-N-acetylenolpyruvoylglucosamine reductase of Anaeromyxobacter sp. (strain Fw109-5).